A 164-amino-acid chain; its full sequence is Phosphopantetheine adenylyltransferase (164 aa).

A substrate-binding site is contributed by serine 9. Residues 9–10 (SF) and histidine 17 contribute to the ATP site. 3 residues coordinate substrate: lysine 41, leucine 73, and lysine 87. Residues 88 to 90 (GLR), glutamate 98, and 123 to 129 (HSFLSSS) contribute to the ATP site.

It belongs to the bacterial CoaD family. In terms of assembly, homohexamer. Mg(2+) is required as a cofactor.

It is found in the cytoplasm. The catalysed reaction is (R)-4'-phosphopantetheine + ATP + H(+) = 3'-dephospho-CoA + diphosphate. The protein operates within cofactor biosynthesis; coenzyme A biosynthesis; CoA from (R)-pantothenate: step 4/5. Reversibly transfers an adenylyl group from ATP to 4'-phosphopantetheine, yielding dephospho-CoA (dPCoA) and pyrophosphate. This chain is Phosphopantetheine adenylyltransferase, found in Rubrobacter xylanophilus (strain DSM 9941 / JCM 11954 / NBRC 16129 / PRD-1).